Consider the following 397-residue polypeptide: Mannitol-1-phosphate 5-dehydrogenase (397 aa).

9 to 20 (AVHFGAGNIGRG) contributes to the NAD(+) binding site. The active site involves Lys-220.

The protein belongs to the mannitol dehydrogenase family. In terms of assembly, monomer.

The catalysed reaction is D-mannitol 1-phosphate + NAD(+) = beta-D-fructose 6-phosphate + NADH + H(+). Functionally, catalyzes the NAD(H)-dependent interconversion of D-fructose 6-phosphate and D-mannitol 1-phosphate in the mannitol metabolic pathway. The polypeptide is Mannitol-1-phosphate 5-dehydrogenase (Podospora anserina (strain S / ATCC MYA-4624 / DSM 980 / FGSC 10383) (Pleurage anserina)).